A 269-amino-acid chain; its full sequence is Chymotrypsin-like elastase family member 2B (269 aa).

A signal peptide spans 1–16; it reads MIRTLLLSTLVAGALS. A propeptide spans 17-28 (activation peptide); it reads CGVSTYAPDMSR. The region spanning 29–267 is the Peptidase S1 domain; that stretch reads MLGGEEARPN…YNDWINSVIA (239 aa). A disulfide bond links C58 and C74. Catalysis depends on charge relay system residues H73 and D121. Cystine bridges form between C155–C222, C186–C202, and C212–C243. The Charge relay system role is filled by S216.

Belongs to the peptidase S1 family. Elastase subfamily. Pancreas.

The protein localises to the secreted. The catalysed reaction is Preferential cleavage: Leu-|-Xaa, Met-|-Xaa and Phe-|-Xaa. Hydrolyzes elastin.. Acts upon elastin. This chain is Chymotrypsin-like elastase family member 2B (CELA2B), found in Homo sapiens (Human).